A 409-amino-acid polypeptide reads, in one-letter code: Pyrophosphate--fructose 6-phosphate 1-phosphotransferase (409 aa).

Residue Gly-14 coordinates diphosphate. Asp-123 serves as a coordination point for Mg(2+). Substrate is bound by residues 151 to 153, 196 to 198, Glu-268, and 325 to 328; these read TVD, MGR, and YFAR. Asp-153 (proton acceptor) is an active-site residue.

This sequence belongs to the phosphofructokinase type A (PFKA) family. PPi-dependent PFK group II subfamily. Clade 'P' sub-subfamily. In terms of assembly, homodimer. It depends on Mg(2+) as a cofactor.

Its subcellular location is the cytoplasm. The catalysed reaction is beta-D-fructose 6-phosphate + diphosphate = beta-D-fructose 1,6-bisphosphate + phosphate + H(+). It functions in the pathway carbohydrate degradation; glycolysis; D-glyceraldehyde 3-phosphate and glycerone phosphate from D-glucose: step 3/4. Its activity is regulated as follows. Non-allosteric. Functionally, catalyzes the phosphorylation of D-fructose 6-phosphate, the first committing step of glycolysis. Uses inorganic phosphate (PPi) as phosphoryl donor instead of ATP like common ATP-dependent phosphofructokinases (ATP-PFKs), which renders the reaction reversible, and can thus function both in glycolysis and gluconeogenesis. Consistently, PPi-PFK can replace the enzymes of both the forward (ATP-PFK) and reverse (fructose-bisphosphatase (FBPase)) reactions. This chain is Pyrophosphate--fructose 6-phosphate 1-phosphotransferase, found in Methylomonas methanica.